The chain runs to 923 residues: TBC1 domain family member 2A (923 aa).

Met-1 is subject to N-acetylmethionine. Residues 1 to 39 (MDGAHENAAESSSSVPRSEEPACSAGGPEVLPPEESEGC) are disordered. The tract at residues 1–171 (MDGAHENAAE…AGNGPTLRLE (171 aa)) is interaction with CADH1. The PH domain occupies 47–144 (PKKLCGYLSK…WLQQLQTKRW (98 aa)). Disordered regions lie at residues 146–166 (FHSS…GNGP) and 232–289 (RQAQ…LIQK). An interaction with RAC1 region spans residues 301 to 439 (AEGLTRTRTA…KVTWDFTHPP (139 aa)). Positions 308–486 (RTAQEKILAL…LNSEIHQVTK (179 aa)) form a coiled coil. Residues 631-823 (GVPREHRPRV…RVWDAFLYEG (193 aa)) enclose the Rab-GAP TBC domain. The stretch at 870–904 (MKQLRQLRRAHRERLEAELHELEQLKAEYLETQSS) forms a coiled coil. Residues 900 to 923 (ETQSSRGPAVPDGCTSEDEGEGEA) are disordered. The span at 914–923 (TSEDEGEGEA) shows a compositional bias: acidic residues. Phosphoserine is present on Ser-915.

Interacts with activated RAC1 and CDH1.

The protein localises to the cytoplasm. The protein resides in the cytoplasmic vesicle. It localises to the cell junction. Acts as a GTPase-activating protein for RAB7A. Signal effector acting as a linker between RAC1 and RAB7A, leading to RAB7A inactivation and subsequent inhibition of cadherin degradation and reduced cell-cell adhesion. The sequence is that of TBC1 domain family member 2A (TBC1D2) from Ailuropoda melanoleuca (Giant panda).